A 152-amino-acid chain; its full sequence is Transcriptional repressor NrdR (152 aa).

Positions 1-10 are enriched in polar residues; sequence MKCPSCQHNG. The disordered stretch occupies residues 1–21; it reads MKCPSCQHNGSRVLDSRPADE. Residues 3–34 fold into a zinc finger; sequence CPSCQHNGSRVLDSRPADEGKSIRRRRECEAC. An ATP-cone domain is found at 49 to 139; that stretch reads LIVVKKEGVR…VYRQFKDINV (91 aa).

The protein belongs to the NrdR family. Requires Zn(2+) as cofactor.

Functionally, negatively regulates transcription of bacterial ribonucleotide reductase nrd genes and operons by binding to NrdR-boxes. The sequence is that of Transcriptional repressor NrdR from Bacillus velezensis (strain DSM 23117 / BGSC 10A6 / LMG 26770 / FZB42) (Bacillus amyloliquefaciens subsp. plantarum).